The following is a 178-amino-acid chain: ATP-dependent protease subunit HslV (178 aa).

Threonine 7 is a catalytic residue. Residues glycine 162, cysteine 165, and threonine 168 each contribute to the Na(+) site.

The protein belongs to the peptidase T1B family. HslV subfamily. In terms of assembly, a double ring-shaped homohexamer of HslV is capped on each side by a ring-shaped HslU homohexamer. The assembly of the HslU/HslV complex is dependent on binding of ATP.

Its subcellular location is the cytoplasm. It catalyses the reaction ATP-dependent cleavage of peptide bonds with broad specificity.. With respect to regulation, allosterically activated by HslU binding. Protease subunit of a proteasome-like degradation complex believed to be a general protein degrading machinery. The protein is ATP-dependent protease subunit HslV of Cupriavidus pinatubonensis (strain JMP 134 / LMG 1197) (Cupriavidus necator (strain JMP 134)).